The sequence spans 239 residues: Calcium-activated potassium channel subunit beta-3 (239 aa).

Topologically, residues 1–51 (MQPFSIPVQITLQGGRRRQGRTALPASGISNGDPLKVHPKLPSSAGEDRAT) are cytoplasmic. The interval 15-38 (GRRRQGRTALPASGISNGDPLKVH) is disordered. Residues 52–72 (LLGIAMMASSVLMFFLLGTTV) traverse the membrane as a helical segment. Residues 73-197 (LKPFMLSSPR…GVVLRKSGHK (125 aa)) lie on the Extracellular side of the membrane. N-linked (GlcNAc...) asparagine glycans are attached at residues Asn86, Asn123, and Asn174. Residues 198 to 218 (VVFHCLFWPLLTLLGGALIVG) form a helical membrane-spanning segment. Residues 219 to 239 (LVRLTQHLSFQCEKYRAVVRA) are Cytoplasmic-facing.

The protein belongs to the KCNMB (TC 8.A.14.1) family. KCNMB3 subfamily. As to quaternary structure, interacts with KCNMA1 tetramer. There are probably 4 molecules of KCMNB3 per KCNMA1 tetramer. N-glycosylated. Post-translationally, the extracellular domain contains disulfide bond essential for the gating mechanism.

The protein resides in the membrane. Its function is as follows. Regulatory subunit of the calcium activated potassium KCNMA1 (maxiK) channel. Modulates the calcium sensitivity and gating kinetics of KCNMA1, thereby contributing to KCNMA1 channel diversity. Alters the functional properties of the current expressed by the KCNMA1 channel. May partially inactivate the current of KCNBMA. Two or more subunits of KCNMB3 are required to block the KCNMA1 tetramer. In Rattus norvegicus (Rat), this protein is Calcium-activated potassium channel subunit beta-3.